Reading from the N-terminus, the 146-residue chain is D-aminoacyl-tRNA deacylase (146 aa).

The short motif at 137–138 is the Gly-cisPro motif, important for rejection of L-amino acids element; the sequence is GP.

It belongs to the DTD family. As to quaternary structure, homodimer.

It is found in the cytoplasm. It catalyses the reaction glycyl-tRNA(Ala) + H2O = tRNA(Ala) + glycine + H(+). The enzyme catalyses a D-aminoacyl-tRNA + H2O = a tRNA + a D-alpha-amino acid + H(+). In terms of biological role, an aminoacyl-tRNA editing enzyme that deacylates mischarged D-aminoacyl-tRNAs. Also deacylates mischarged glycyl-tRNA(Ala), protecting cells against glycine mischarging by AlaRS. Acts via tRNA-based rather than protein-based catalysis; rejects L-amino acids rather than detecting D-amino acids in the active site. By recycling D-aminoacyl-tRNA to D-amino acids and free tRNA molecules, this enzyme counteracts the toxicity associated with the formation of D-aminoacyl-tRNA entities in vivo and helps enforce protein L-homochirality. The chain is D-aminoacyl-tRNA deacylase from Psychrobacter sp. (strain PRwf-1).